An 820-amino-acid polypeptide reads, in one-letter code: Disintegrin and metalloproteinase domain-containing protein 29 (820 aa).

Positions 1–18 (MKMLLLLHCLGVFLSCSG) are cleaved as a signal peptide. The propeptide occupies 19 to 193 (HIQDEHPQYH…TQKQSSYVGW (175 aa)). Residues 194–674 (WIHFRIVEIV…GPPPKRKKKK (481 aa)) are Extracellular-facing. One can recognise a Peptidase M12B domain in the interval 198–390 (RIVEIVVVID…RTKCLLETVH (193 aa)). Residues N217 and N320 are each glycosylated (N-linked (GlcNAc...) asparagine). 3 cysteine pairs are disulfide-bonded: C307–C384, C347–C369, and C349–C354. N368, N428, N469, N538, N545, N558, and N564 each carry an N-linked (GlcNAc...) asparagine glycan. Residues 397-483 (VKRCGNGVVE…KCPDDFYVED (87 aa)) enclose the Disintegrin domain. C455 and C475 are disulfide-bonded. 3 cysteine pairs are disulfide-bonded: C625/C636, C630/C642, and C644/C653. An EGF-like domain is found at 625–654 (CSPAFCNKRGICNNKHHCHCNYLWDPPNCL). The chain crosses the membrane as a helical span at residues 675–695 (KFCYLCILLLIVLFILLCCLY). At 696-820 (RLCKKSKPIK…SQSQPPVTPS (125 aa)) the chain is on the cytoplasmic side. The tract at residues 706 to 820 (KQQDVQTPSA…SQSQPPVTPS (115 aa)) is disordered. Over residues 715–727 (AKEEEKIQRRPHE) the composition is skewed to basic and acidic residues. Low complexity predominate over residues 738–820 (PSQSQPPVTP…SQSQPPVTPS (83 aa)). 9 consecutive repeat copies span residues 739-747 (SQSQPPVTP), 748-756 (SQSHPQVMP), 757-765 (SQSQPPVTP), 766-774 (SQSQPRVMP), 775-783 (SQSQPPVMP), 784-792 (SQSHPQLTP), 793-801 (SQSQPPVTP), 802-810 (SQRQPQLMP), and 811-819 (SQSQPPVTP). Positions 739 to 819 (SQSQPPVTPS…PSQSQPPVTP (81 aa)) are 9 X 9 AA approximate repeats.

Expressed specifically in testes.

It is found in the membrane. Functionally, may be involved in spermatogenesis and fertilization. Seems to be a non catalytic metalloprotease-like protein. This chain is Disintegrin and metalloproteinase domain-containing protein 29 (ADAM29), found in Homo sapiens (Human).